Reading from the N-terminus, the 131-residue chain is Protein ApaG (131 aa).

In terms of domain architecture, ApaG spans 3 to 127 (RAVTRQIEVT…FSLDSPDGGK (125 aa)).

The polypeptide is Protein ApaG (Bradyrhizobium sp. (strain BTAi1 / ATCC BAA-1182)).